Consider the following 420-residue polypeptide: S-adenosylmethionine synthase (420 aa).

Position 16 (His16) interacts with ATP. Asp18 contacts Mg(2+). Residue Glu44 coordinates K(+). L-methionine contacts are provided by Glu57 and Gln100. The interval 100 to 110 is flexible loop; sequence QSADIAQGVDK. ATP contacts are provided by residues 175–177, 251–252, Asp260, 266–267, Ala283, and Lys287; these read DGK, KF, and RK. Position 260 (Asp260) interacts with L-methionine. Lys291 is a binding site for L-methionine.

The protein belongs to the AdoMet synthase family. As to quaternary structure, homotetramer; dimer of dimers. Mg(2+) is required as a cofactor. K(+) serves as cofactor.

Its subcellular location is the cytoplasm. The enzyme catalyses L-methionine + ATP + H2O = S-adenosyl-L-methionine + phosphate + diphosphate. It functions in the pathway amino-acid biosynthesis; S-adenosyl-L-methionine biosynthesis; S-adenosyl-L-methionine from L-methionine: step 1/1. In terms of biological role, catalyzes the formation of S-adenosylmethionine (AdoMet) from methionine and ATP. The overall synthetic reaction is composed of two sequential steps, AdoMet formation and the subsequent tripolyphosphate hydrolysis which occurs prior to release of AdoMet from the enzyme. This is S-adenosylmethionine synthase from Trichodesmium erythraeum (strain IMS101).